Reading from the N-terminus, the 187-residue chain is Ribosome-recycling factor (187 aa).

The protein belongs to the RRF family.

Its subcellular location is the cytoplasm. Responsible for the release of ribosomes from messenger RNA at the termination of protein biosynthesis. May increase the efficiency of translation by recycling ribosomes from one round of translation to another. This is Ribosome-recycling factor from Nitrosococcus oceani (strain ATCC 19707 / BCRC 17464 / JCM 30415 / NCIMB 11848 / C-107).